A 396-amino-acid chain; its full sequence is MSWSFLTRLLEEIHNHSTFVGKIWLTVLIVFRIVLTAVGGESIYYDEQSKFVCNTEQPGCENVCYDAFAPLSHVRFWVFQIILVATPSVMYLGYAIHKIAKMEHGDADKKAARSKPYAMRWKQHRALEETEEDHEEDPMMYPEMELESEKENKDQNQSKPKHDGRRRIREDGLMKIYVLQLLARTVFEVGFLVGQYFLYGFQVHPFYVCSRLPCPHKIDCFISRPTEKTIFLLIMYGVTGLCLLLNIWEMLHLGFGTIRDSLNSKRRELEDPGAYNYPFTWNTPSAPPGYNIAVKPDQIQYTELSNAKIAYKQNKANIAQEQQYGSHEDNLPPDLETLQREIRMAQERLDLAIQAYNHQNNPHGSREKKAKVGSKAGSNKSSASSKSGDGKTSVWI.

At 1–22 (MSWSFLTRLLEEIHNHSTFVGK) the chain is on the cytoplasmic side. The helical transmembrane segment at 23 to 45 (IWLTVLIVFRIVLTAVGGESIYY) threads the bilayer. Residues 46–75 (DEQSKFVCNTEQPGCENVCYDAFAPLSHVR) are Extracellular-facing. A helical membrane pass occupies residues 76 to 95 (FWVFQIILVATPSVMYLGYA). The Cytoplasmic portion of the chain corresponds to 96-175 (IHKIAKMEHG…RRIREDGLMK (80 aa)). A disordered region spans residues 146-165 (LESEKENKDQNQSKPKHDGR). Positions 147-156 (ESEKENKDQN) are enriched in basic and acidic residues. The helical transmembrane segment at 176 to 198 (IYVLQLLARTVFEVGFLVGQYFL) threads the bilayer. At 199 to 228 (YGFQVHPFYVCSRLPCPHKIDCFISRPTEK) the chain is on the extracellular side. A helical transmembrane segment spans residues 229 to 248 (TIFLLIMYGVTGLCLLLNIW). Topologically, residues 249 to 396 (EMLHLGFGTI…SGDGKTSVWI (148 aa)) are cytoplasmic. Residues 356–396 (YNHQNNPHGSREKKAKVGSKAGSNKSSASSKSGDGKTSVWI) are disordered. Positions 373-396 (GSKAGSNKSSASSKSGDGKTSVWI) are enriched in low complexity.

The protein belongs to the connexin family. Gamma-type subfamily. As to quaternary structure, a connexon is composed of a hexamer of connexins. Interacts with CNST.

The protein localises to the cell membrane. It is found in the cell junction. Its subcellular location is the gap junction. Its function is as follows. One gap junction consists of a cluster of closely packed pairs of transmembrane channels, the connexons, through which materials of low MW diffuse from one cell to a neighboring cell. This Bos taurus (Bovine) protein is Gap junction gamma-1 protein (GJC1).